The sequence spans 302 residues: 1D-myo-inositol 2-acetamido-2-deoxy-alpha-D-glucopyranoside deacetylase (302 aa).

Zn(2+)-binding residues include His-13, Asp-16, and His-155.

Belongs to the MshB deacetylase family. The cofactor is Zn(2+).

It catalyses the reaction 1D-myo-inositol 2-acetamido-2-deoxy-alpha-D-glucopyranoside + H2O = 1D-myo-inositol 2-amino-2-deoxy-alpha-D-glucopyranoside + acetate. Catalyzes the deacetylation of 1D-myo-inositol 2-acetamido-2-deoxy-alpha-D-glucopyranoside (GlcNAc-Ins) in the mycothiol biosynthesis pathway. This Nocardioides sp. (strain ATCC BAA-499 / JS614) protein is 1D-myo-inositol 2-acetamido-2-deoxy-alpha-D-glucopyranoside deacetylase.